Here is a 358-residue protein sequence, read N- to C-terminus: Chorismate synthase (358 aa).

NADP(+) is bound by residues arginine 48 and arginine 54. FMN contacts are provided by residues 125-127 (RSS), glycine 282, 297-301 (KPPAS), and arginine 323.

The protein belongs to the chorismate synthase family. As to quaternary structure, homotetramer. Requires FMNH2 as cofactor.

The catalysed reaction is 5-O-(1-carboxyvinyl)-3-phosphoshikimate = chorismate + phosphate. It functions in the pathway metabolic intermediate biosynthesis; chorismate biosynthesis; chorismate from D-erythrose 4-phosphate and phosphoenolpyruvate: step 7/7. Catalyzes the anti-1,4-elimination of the C-3 phosphate and the C-6 proR hydrogen from 5-enolpyruvylshikimate-3-phosphate (EPSP) to yield chorismate, which is the branch point compound that serves as the starting substrate for the three terminal pathways of aromatic amino acid biosynthesis. This reaction introduces a second double bond into the aromatic ring system. This Roseiflexus castenholzii (strain DSM 13941 / HLO8) protein is Chorismate synthase.